The sequence spans 377 residues: Nitric oxide reductase FlRd-NAD(+) reductase (377 aa).

It belongs to the FAD-dependent oxidoreductase family. The cofactor is FAD.

It is found in the cytoplasm. It carries out the reaction 2 reduced [nitric oxide reductase rubredoxin domain] + NAD(+) + H(+) = 2 oxidized [nitric oxide reductase rubredoxin domain] + NADH. It participates in nitrogen metabolism; nitric oxide reduction. Its function is as follows. One of at least two accessory proteins for anaerobic nitric oxide (NO) reductase. Reduces the rubredoxin moiety of NO reductase. The polypeptide is Nitric oxide reductase FlRd-NAD(+) reductase (Salmonella typhimurium (strain LT2 / SGSC1412 / ATCC 700720)).